The chain runs to 82 residues: ATP synthase subunit c, chloroplastic (82 aa).

Transmembrane regions (helical) follow at residues 3–23 (PIVA…AAIG) and 57–77 (FAFM…LLFA).

It belongs to the ATPase C chain family. In terms of assembly, F-type ATPases have 2 components, F(1) - the catalytic core - and F(0) - the membrane proton channel. F(1) has five subunits: alpha(3), beta(3), gamma(1), delta(1), epsilon(1). F(0) has four main subunits: a(1), b(1), b'(1) and c(10-14). The alpha and beta chains form an alternating ring which encloses part of the gamma chain. F(1) is attached to F(0) by a central stalk formed by the gamma and epsilon chains, while a peripheral stalk is formed by the delta, b and b' chains.

It is found in the plastid. Its subcellular location is the chloroplast thylakoid membrane. Functionally, f(1)F(0) ATP synthase produces ATP from ADP in the presence of a proton or sodium gradient. F-type ATPases consist of two structural domains, F(1) containing the extramembraneous catalytic core and F(0) containing the membrane proton channel, linked together by a central stalk and a peripheral stalk. During catalysis, ATP synthesis in the catalytic domain of F(1) is coupled via a rotary mechanism of the central stalk subunits to proton translocation. Key component of the F(0) channel; it plays a direct role in translocation across the membrane. A homomeric c-ring of between 10-14 subunits forms the central stalk rotor element with the F(1) delta and epsilon subunits. This chain is ATP synthase subunit c, chloroplastic, found in Chlorella vulgaris (Green alga).